The sequence spans 177 residues: Large ribosomal subunit protein uL5c (177 aa).

The protein belongs to the universal ribosomal protein uL5 family. As to quaternary structure, part of the 50S ribosomal subunit; contacts the 5S rRNA.

Its subcellular location is the plastid. The protein localises to the chloroplast. Binds 5S rRNA, forms part of the central protuberance of the 50S subunit. This Cyanidioschyzon merolae (strain NIES-3377 / 10D) (Unicellular red alga) protein is Large ribosomal subunit protein uL5c (rpl5).